The following is a 596-amino-acid chain: Bromodomain-containing protein 9 (596 aa).

A compositionally biased stretch (basic residues) spans 1–10; sequence MGKKHKKHKS. 2 disordered regions span residues 1 to 31 and 49 to 119; these read MGKK…QYYV and EVTE…SEGE. The span at 61–73 shows a compositional bias: basic and acidic residues; that stretch reads SFYEDRSDHERER. The segment covering 74-84 has biased composition (basic residues); it reads HKEKKKKKKKK. Basic and acidic residues predominate over residues 85 to 98; sequence SEKEKDKYLDEDER. The segment covering 99 to 109 has biased composition (basic residues); the sequence is RRRKEEKKRKR. In terms of domain architecture, Bromo spans 148-252; it reads NESTPLQQLL…HTGFKMMSKQ (105 aa). The segment at 226–228 is histone H4K5ac H4K8ac and histone H4K5bu H4K8bu binding; sequence TYN. The span at 537–547 shows a compositional bias: basic and acidic residues; it reads DFHDVHNDRGG. The tract at residues 537–596 is disordered; that stretch reads DFHDVHNDRGGSRPSSSSSVSNNSERDHHLGSPSRISVGEQQDIHDPYEFLQSPETENQN. Over residues 548-559 the composition is skewed to low complexity; that stretch reads SRPSSSSSVSNN.

Binds acetylated histones H3 and H4. Binds butyrylated histone H4.

It localises to the nucleus. Functionally, plays a role in chromatin remodeling and regulation of transcription. Acts as a chromatin reader that recognizes and binds acylated histones: binds histones that are acetylated and/or butyrylated. The polypeptide is Bromodomain-containing protein 9 (brd9) (Xenopus tropicalis (Western clawed frog)).